The chain runs to 1006 residues: Probable protein phosphatase DDB_G0279461 (1006 aa).

Residues Met1 to Ser12 are compositionally biased toward polar residues. Disordered stretches follow at residues Met1–Glu119, Ser146–Ser188, Ser214–Arg269, Asp312–Gln387, Asn459–Gln513, Asp525–Phe563, and Gly604–Ser642. Acidic residues predominate over residues Asn59 to Leu69. Positions Ala65–Asn122 form a coiled coil. A compositionally biased stretch (low complexity) spans Asn77–Gly88. Over residues Ile89–Asp99 the composition is skewed to acidic residues. Residues Asn100 to Asn117 show a composition bias toward low complexity. Over residues Ser146 to Ser158 the composition is skewed to polar residues. 3 stretches are compositionally biased toward low complexity: residues Ser220–Asn234, Asn244–Asn254, and Asn316–Gln387. The stretch at Lys450–Gln516 forms a coiled coil. The span at Thr466–His481 shows a compositional bias: polar residues. Positions Asn482–Asn511 are enriched in low complexity. The segment covering Asp525–Asn538 has biased composition (polar residues). Composition is skewed to low complexity over residues Ser552–Ser561 and Asn613–Thr639. The PPM-type phosphatase domain maps to Asp744–Leu1005. Residues Asp784, Gly785, Asp956, and Asp996 each coordinate Mn(2+).

In the C-terminal section; belongs to the PP2C family. Requires Mg(2+) as cofactor. Mn(2+) serves as cofactor.

The enzyme catalyses O-phospho-L-seryl-[protein] + H2O = L-seryl-[protein] + phosphate. The catalysed reaction is O-phospho-L-threonyl-[protein] + H2O = L-threonyl-[protein] + phosphate. The polypeptide is Probable protein phosphatase DDB_G0279461 (Dictyostelium discoideum (Social amoeba)).